We begin with the raw amino-acid sequence, 430 residues long: UDP-N-acetylglucosamine 1-carboxyvinyltransferase 1 (430 aa).

Residue 22 to 23 coordinates phosphoenolpyruvate; sequence KN. Arginine 93 contributes to the UDP-N-acetyl-alpha-D-glucosamine binding site. Catalysis depends on cysteine 117, which acts as the Proton donor. Cysteine 117 is subject to 2-(S-cysteinyl)pyruvic acid O-phosphothioketal. Residues 122 to 126, aspartate 305, and valine 327 each bind UDP-N-acetyl-alpha-D-glucosamine; that span reads RPVDL.

It belongs to the EPSP synthase family. MurA subfamily.

It localises to the cytoplasm. It carries out the reaction phosphoenolpyruvate + UDP-N-acetyl-alpha-D-glucosamine = UDP-N-acetyl-3-O-(1-carboxyvinyl)-alpha-D-glucosamine + phosphate. The protein operates within cell wall biogenesis; peptidoglycan biosynthesis. In terms of biological role, cell wall formation. Adds enolpyruvyl to UDP-N-acetylglucosamine. The protein is UDP-N-acetylglucosamine 1-carboxyvinyltransferase 1 of Listeria innocua serovar 6a (strain ATCC BAA-680 / CLIP 11262).